Reading from the N-terminus, the 227-residue chain is Thymidylate kinase (227 aa).

ATP is bound at residue 16 to 23; that stretch reads GIDGAGKT.

It belongs to the thymidylate kinase family.

It carries out the reaction dTMP + ATP = dTDP + ADP. Functionally, phosphorylation of dTMP to form dTDP in both de novo and salvage pathways of dTTP synthesis. The chain is Thymidylate kinase from Xanthomonas campestris pv. campestris (strain 8004).